Reading from the N-terminus, the 864-residue chain is Protein translocase subunit SecA (864 aa).

ATP-binding positions include Gln-87, 105–109 (GEGKT), and Asp-494. Residues 809–864 (AKATELRHKEQPAELSYSGGDEDGAKTPSRRNAPKVGRNDPCPCGSGKKYKKCCGA) form a disordered region. The segment covering 810-820 (KATELRHKEQP) has biased composition (basic and acidic residues). Residues Cys-850, Cys-852, Cys-861, and Cys-862 each contribute to the Zn(2+) site.

This sequence belongs to the SecA family. Monomer and homodimer. Part of the essential Sec protein translocation apparatus which comprises SecA, SecYEG and auxiliary proteins SecDF-YajC and YidC. Requires Zn(2+) as cofactor.

Its subcellular location is the cell inner membrane. The protein resides in the cytoplasm. The catalysed reaction is ATP + H2O + cellular proteinSide 1 = ADP + phosphate + cellular proteinSide 2.. Part of the Sec protein translocase complex. Interacts with the SecYEG preprotein conducting channel. Has a central role in coupling the hydrolysis of ATP to the transfer of proteins into and across the cell membrane, serving as an ATP-driven molecular motor driving the stepwise translocation of polypeptide chains across the membrane. The protein is Protein translocase subunit SecA of Oleidesulfovibrio alaskensis (strain ATCC BAA-1058 / DSM 17464 / G20) (Desulfovibrio alaskensis).